Consider the following 91-residue polypeptide: N.vectensis toxin 8 (91 aa).

The signal sequence occupies residues 1–26 (MNSLLKVAVVCLVMLVACFVPRVILT). 3 disulfide bridges follow: Cys-45/Cys-76, Cys-47/Cys-67, and Cys-60/Cys-77.

Expressed in ectodermal gland cells.

Its function is as follows. Has toxic effects on zebrafish larvae. It causes contractile paralysis and twitching of the tail within 20 minutes, followed by death within 30 minutes. Does not show any toxicity when injected into arthropods (cherry shrimps or grass shrimps). This chain is N.vectensis toxin 8, found in Nematostella vectensis (Starlet sea anemone).